Reading from the N-terminus, the 158-residue chain is Transcription elongation factor GreA (158 aa).

The stretch at 53–73 (EQQSFIEGRIQEIEGKLSNAQ) forms a coiled coil.

Belongs to the GreA/GreB family.

Functionally, necessary for efficient RNA polymerase transcription elongation past template-encoded arresting sites. The arresting sites in DNA have the property of trapping a certain fraction of elongating RNA polymerases that pass through, resulting in locked ternary complexes. Cleavage of the nascent transcript by cleavage factors such as GreA or GreB allows the resumption of elongation from the new 3'terminus. GreA releases sequences of 2 to 3 nucleotides. The chain is Transcription elongation factor GreA from Halorhodospira halophila (strain DSM 244 / SL1) (Ectothiorhodospira halophila (strain DSM 244 / SL1)).